A 795-amino-acid polypeptide reads, in one-letter code: Delta-1-pyrroline-5-carboxylate synthase (795 aa).

Positions 1 to 361 (MLSQVYRCGF…FFSEVKPAGP (361 aa)) are glutamate 5-kinase. Residues Ser117, Asp223, and Asn246 each coordinate substrate. ATP is bound by residues 266–267 (SD) and 305–311 (MGGMEAK). An N6-succinyllysine mark is found at Lys311, Lys347, and Lys550. Positions 362-795 (TVEQQGEMAR…NLPIPQRNTN (434 aa)) are gamma-glutamyl phosphate reductase.

This sequence in the N-terminal section; belongs to the glutamate 5-kinase family. In the C-terminal section; belongs to the gamma-glutamyl phosphate reductase family. In terms of assembly, can form homodimers/multimers.

It localises to the mitochondrion. The protein localises to the mitochondrion matrix. The catalysed reaction is L-glutamate + ATP = L-glutamyl 5-phosphate + ADP. It catalyses the reaction L-glutamate 5-semialdehyde + phosphate + NADP(+) = L-glutamyl 5-phosphate + NADPH + H(+). Its pathway is amino-acid biosynthesis; L-proline biosynthesis; L-glutamate 5-semialdehyde from L-glutamate: step 1/2. It functions in the pathway amino-acid biosynthesis; L-proline biosynthesis; L-glutamate 5-semialdehyde from L-glutamate: step 2/2. Its activity is regulated as follows. Isoform Short: Inhibited by L-ornithine with a Ki of approximately 0.25 mm. Isoform Long: Insensitive to ornithine inhibition. This is due to the two amino acid insert which abolishes feedback inhibition of P5CS activity by L-ornithine. Functionally, bifunctional enzyme that converts glutamate to glutamate 5-semialdehyde, an intermediate in the biosynthesis of proline, ornithine and arginine. This is Delta-1-pyrroline-5-carboxylate synthase (ALDH18A1) from Homo sapiens (Human).